The primary structure comprises 206 residues: Probable glutathione peroxidase 3, mitochondrial (206 aa).

A mitochondrion-targeting transit peptide spans 1-12; that stretch reads MPRSSRWVNQRA. Residue Cys-80 is part of the active site.

This sequence belongs to the glutathione peroxidase family. Interacts with ABI1 and ABI2. Ubiquitous.

It is found in the mitochondrion. The enzyme catalyses 2 glutathione + H2O2 = glutathione disulfide + 2 H2O. With respect to regulation, the redox states are modulated by H(2)O(2). Its function is as follows. May constitute a glutathione peroxidase-like protective system against oxidative stresses. Involved positively in abscisic acid (ABA) signaling pathway that regulates numerous ABA responses, such as stomatal closure, seed germination and inhibition of vegetative growth. Oxidizes and represses target proteins (e.g. the phosphatase activity of ABI1 and ABI2) when oxidized by H(2)O(2), probably after ABA signaling. Modulates the calcium channel activity in guard cells in response to ABA or H(2)O(2). Confers tolerance to drought stress, by enhancing the ABA-dependent stomatal closure. This chain is Probable glutathione peroxidase 3, mitochondrial (GPX3), found in Arabidopsis thaliana (Mouse-ear cress).